The following is a 343-amino-acid chain: Armadillo repeat-containing protein 10 (343 aa).

A helical membrane pass occupies residues 5-27 (RGAGWVAAGLLLGAGACYCIYRL). A disordered region spans residues 43–83 (SKSAGALEEGTSEGQLCGRSARPQTGGTWESQWSKTSQPED). S45 carries the post-translational modification Phosphoserine. Phosphothreonine is present on E50. Positions 64–82 (RPQTGGTWESQWSKTSQPE) are enriched in polar residues. T85 carries the phosphothreonine modification. Residues 138 to 180 (GGIPIVANKINHSNQSIKEKALNALNNLSVNVENQIKIKIYIS) form an ARM repeat.

In terms of assembly, interacts with the DNA-binding domain of p53/TP53. As to expression, expressed in all tissues tested with higher expression in placenta, liver, kidney, heart and brain.

It localises to the endoplasmic reticulum membrane. The protein localises to the mitochondrion outer membrane. In terms of biological role, may play a role in cell survival and cell growth. May suppress the transcriptional activity of p53/TP53. The polypeptide is Armadillo repeat-containing protein 10 (ARMC10) (Homo sapiens (Human)).